The sequence spans 394 residues: Elongation factor Tu (394 aa).

Positions 10-204 (KPHVNVGTIG…ALDTYIPEPE (195 aa)) constitute a tr-type G domain. A G1 region spans residues 19–26 (GHVDHGKT). 19-26 (GHVDHGKT) is a binding site for GTP. Thr-26 provides a ligand contact to Mg(2+). The segment at 60-64 (GITIA) is G2. Residues 81-84 (DCPG) are G3. Residues 81-85 (DCPGH) and 136-139 (NKCD) each bind GTP. The interval 136 to 139 (NKCD) is G4. Positions 174-176 (SAL) are G5.

It belongs to the TRAFAC class translation factor GTPase superfamily. Classic translation factor GTPase family. EF-Tu/EF-1A subfamily. As to quaternary structure, monomer.

The protein resides in the cytoplasm. It carries out the reaction GTP + H2O = GDP + phosphate + H(+). In terms of biological role, GTP hydrolase that promotes the GTP-dependent binding of aminoacyl-tRNA to the A-site of ribosomes during protein biosynthesis. The chain is Elongation factor Tu from Vibrio parahaemolyticus serotype O3:K6 (strain RIMD 2210633).